A 133-amino-acid polypeptide reads, in one-letter code: Profilin-1 (133 aa).

It belongs to the profilin family. In terms of assembly, occurs in many kinds of cells as a complex with monomeric actin in a 1:1 ratio. As to expression, ubiquitous.

The protein resides in the cytoplasm. It is found in the cytoskeleton. In terms of biological role, binds to actin and affects the structure of the cytoskeleton. At high concentrations, profilin prevents the polymerization of actin, whereas it enhances it at low concentrations. By binding to PIP2, it inhibits the formation of IP3 and DG. In Solanum lycopersicum (Tomato), this protein is Profilin-1 (PRO1).